A 504-amino-acid chain; its full sequence is AMP phosphorylase 1 (504 aa).

Residues Gly169, 195 to 200, and Thr204 each bind AMP; that span reads SRAITS. Asp257 (proton donor) is an active-site residue. Residues Ser265 and Lys289 each contribute to the AMP site.

This sequence belongs to the thymidine/pyrimidine-nucleoside phosphorylase family. Type 2 subfamily.

The catalysed reaction is AMP + phosphate = alpha-D-ribose 1,5-bisphosphate + adenine. It carries out the reaction CMP + phosphate = cytosine + alpha-D-ribose 1,5-bisphosphate. It catalyses the reaction UMP + phosphate = alpha-D-ribose 1,5-bisphosphate + uracil. Catalyzes the conversion of AMP and phosphate to adenine and ribose 1,5-bisphosphate (R15P). Exhibits phosphorylase activity toward CMP and UMP in addition to AMP. Functions in an archaeal AMP degradation pathway, together with R15P isomerase and RubisCO. The protein is AMP phosphorylase 1 of Archaeoglobus fulgidus (strain ATCC 49558 / DSM 4304 / JCM 9628 / NBRC 100126 / VC-16).